The chain runs to 544 residues: Coiled-coil domain-containing protein 82 (544 aa).

Residues 1-14 (MIHVRRHETRRNSK) are compositionally biased toward basic residues. The disordered stretch occupies residues 1 to 294 (MIHVRRHETR…ESDEDGDDYI (294 aa)). Residues 16–27 (HVPEQKSRVDWR) are compositionally biased toward basic and acidic residues. Over residues 39–67 (DSDEELDSEEFDSDEELDSDESFENDEEL) the composition is skewed to acidic residues. Residues serine 88, serine 131, serine 154, serine 195, and serine 219 each carry the phosphoserine modification. Positions 88-108 (SKIQSEGNDSKCLINSGNGST) are enriched in polar residues. Basic and acidic residues predominate over residues 112 to 132 (ETNKIKHRNIDLQDQEKHLSQ). Residues 223 to 248 (MEQKTPEKTLAAQKREKLQKLKELSK) show a composition bias toward basic and acidic residues. At threonine 227 the chain carries Phosphothreonine. Residues 229 to 256 (EKTLAAQKREKLQKLKELSKQRSRQRRS) adopt a coiled-coil conformation. The span at 273-294 (DEVDEEEEEDNYESDEDGDDYI) shows a compositional bias: acidic residues. Serine 329 is modified (phosphoserine).

The chain is Coiled-coil domain-containing protein 82 (CCDC82) from Homo sapiens (Human).